A 165-amino-acid chain; its full sequence is Biosynthetic peptidoglycan transglycosylase (165 aa).

The protein belongs to the glycosyltransferase 51 family.

It is found in the cell inner membrane. It carries out the reaction [GlcNAc-(1-&gt;4)-Mur2Ac(oyl-L-Ala-gamma-D-Glu-L-Lys-D-Ala-D-Ala)](n)-di-trans,octa-cis-undecaprenyl diphosphate + beta-D-GlcNAc-(1-&gt;4)-Mur2Ac(oyl-L-Ala-gamma-D-Glu-L-Lys-D-Ala-D-Ala)-di-trans,octa-cis-undecaprenyl diphosphate = [GlcNAc-(1-&gt;4)-Mur2Ac(oyl-L-Ala-gamma-D-Glu-L-Lys-D-Ala-D-Ala)](n+1)-di-trans,octa-cis-undecaprenyl diphosphate + di-trans,octa-cis-undecaprenyl diphosphate + H(+). Its pathway is cell wall biogenesis; peptidoglycan biosynthesis. Functionally, peptidoglycan polymerase that catalyzes glycan chain elongation from lipid-linked precursors. The sequence is that of Biosynthetic peptidoglycan transglycosylase from Neisseria meningitidis.